The sequence spans 400 residues: Tektin-B1 (400 aa).

Coiled coils occupy residues 35–81 (TRLS…AKAL), 236–294 (FALR…LENR), and 310–353 (GLVN…LELK).

This sequence belongs to the tektin family. May form a heterodimer with tektin a or exist as a homodimer. In terms of tissue distribution, cilia and flagella.

The protein localises to the cytoplasm. It is found in the cytoskeleton. Its function is as follows. Structural component of ciliary and flagellar microtubules. The sequence is that of Tektin-B1 from Strongylocentrotus purpuratus (Purple sea urchin).